The primary structure comprises 549 residues: Hydroxylamine reductase (549 aa).

The [4Fe-4S] cluster site is built by C5, C8, C17, and C23. H250, E274, C318, C404, C432, C457, E491, and K493 together coordinate hybrid [4Fe-2O-2S] cluster. A Cysteine persulfide modification is found at C404.

The protein belongs to the HCP family. Requires [4Fe-4S] cluster as cofactor. The cofactor is hybrid [4Fe-2O-2S] cluster.

It is found in the cytoplasm. It carries out the reaction A + NH4(+) + H2O = hydroxylamine + AH2 + H(+). In terms of biological role, catalyzes the reduction of hydroxylamine to form NH(3) and H(2)O. The protein is Hydroxylamine reductase of Geobacter metallireducens (strain ATCC 53774 / DSM 7210 / GS-15).